Here is a 127-residue protein sequence, read N- to C-terminus: Large ribosomal subunit protein bL17 (127 aa).

This sequence belongs to the bacterial ribosomal protein bL17 family. Part of the 50S ribosomal subunit. Contacts protein L32.

The chain is Large ribosomal subunit protein bL17 from Stenotrophomonas maltophilia (strain K279a).